The primary structure comprises 460 residues: uncharacterized protein (460 aa).

The TRAM domain maps to 9–67 (NFKKNDIFEAEVLDLTHEGQGVVKIDSFPFFVDNALPGERIKMHVLKVGKSFGFGRVDE). Positions 292, 321, 342, and 390 each coordinate S-adenosyl-L-methionine. Cysteine 417 functions as the Nucleophile in the catalytic mechanism.

It belongs to the class I-like SAM-binding methyltransferase superfamily. RNA M5U methyltransferase family.

This is an uncharacterized protein from Lactococcus lactis subsp. lactis (strain IL1403) (Streptococcus lactis).